Here is a 338-residue protein sequence, read N- to C-terminus: Ketol-acid reductoisomerase (NADP(+)) (338 aa).

The KARI N-terminal Rossmann domain occupies 1–181; it reads MHVYYDKDCD…GGGRTGIIET (181 aa). Residues 24 to 27, R47, S50, T52, and 82 to 85 each bind NADP(+); these read YGSQ and DEFQ. H107 is a catalytic residue. G133 is a binding site for NADP(+). Positions 182–327 constitute a KARI C-terminal knotted domain; sequence TFKDETETDL…AKLRAMMPWI (146 aa). Mg(2+) is bound by residues D190, E194, E226, and E230. S251 lines the substrate pocket.

The protein belongs to the ketol-acid reductoisomerase family. The cofactor is Mg(2+).

It carries out the reaction (2R)-2,3-dihydroxy-3-methylbutanoate + NADP(+) = (2S)-2-acetolactate + NADPH + H(+). It catalyses the reaction (2R,3R)-2,3-dihydroxy-3-methylpentanoate + NADP(+) = (S)-2-ethyl-2-hydroxy-3-oxobutanoate + NADPH + H(+). It participates in amino-acid biosynthesis; L-isoleucine biosynthesis; L-isoleucine from 2-oxobutanoate: step 2/4. The protein operates within amino-acid biosynthesis; L-valine biosynthesis; L-valine from pyruvate: step 2/4. Functionally, involved in the biosynthesis of branched-chain amino acids (BCAA). Catalyzes an alkyl-migration followed by a ketol-acid reduction of (S)-2-acetolactate (S2AL) to yield (R)-2,3-dihydroxy-isovalerate. In the isomerase reaction, S2AL is rearranged via a Mg-dependent methyl migration to produce 3-hydroxy-3-methyl-2-ketobutyrate (HMKB). In the reductase reaction, this 2-ketoacid undergoes a metal-dependent reduction by NADPH to yield (R)-2,3-dihydroxy-isovalerate. The polypeptide is Ketol-acid reductoisomerase (NADP(+)) (Cellvibrio japonicus (strain Ueda107) (Pseudomonas fluorescens subsp. cellulosa)).